We begin with the raw amino-acid sequence, 285 residues long: Tryptophan synthase alpha chain (285 aa).

Residues E53 and D64 each act as proton acceptor in the active site.

It belongs to the TrpA family. As to quaternary structure, tetramer of two alpha and two beta chains.

It catalyses the reaction (1S,2R)-1-C-(indol-3-yl)glycerol 3-phosphate + L-serine = D-glyceraldehyde 3-phosphate + L-tryptophan + H2O. The protein operates within amino-acid biosynthesis; L-tryptophan biosynthesis; L-tryptophan from chorismate: step 5/5. The alpha subunit is responsible for the aldol cleavage of indoleglycerol phosphate to indole and glyceraldehyde 3-phosphate. The chain is Tryptophan synthase alpha chain from Bordetella bronchiseptica (strain ATCC BAA-588 / NCTC 13252 / RB50) (Alcaligenes bronchisepticus).